A 421-amino-acid chain; its full sequence is Anthranilate synthase component 1 (421 aa).

Residues Ser-31 and 207–209 (PYM) contribute to the L-tryptophan site. Residue 242-243 (GT) participates in chorismate binding. Glu-269 serves as a coordination point for Mg(2+). Chorismate-binding positions include Tyr-357, Arg-377, 391–393 (GAG), and Gly-393. Mg(2+) is bound at residue Glu-406.

It belongs to the anthranilate synthase component I family. In terms of assembly, heterotetramer consisting of two non-identical subunits: a beta subunit (TrpG) and a large alpha subunit (TrpE). Requires Mg(2+) as cofactor.

The enzyme catalyses chorismate + L-glutamine = anthranilate + pyruvate + L-glutamate + H(+). It participates in amino-acid biosynthesis; L-tryptophan biosynthesis; L-tryptophan from chorismate: step 1/5. Cooperatively feedback inhibited by tryptophan. In terms of biological role, part of a heterotetrameric complex that catalyzes the two-step biosynthesis of anthranilate, an intermediate in the biosynthesis of L-tryptophan. In the first step, the glutamine-binding beta subunit (TrpG) of anthranilate synthase (AS) provides the glutamine amidotransferase activity which generates ammonia as a substrate that, along with chorismate, is used in the second step, catalyzed by the large alpha subunit of AS (TrpE) to produce anthranilate. In the absence of TrpG, TrpE can synthesize anthranilate directly from chorismate and high concentrations of ammonia. The sequence is that of Anthranilate synthase component 1 (trpE) from Saccharolobus solfataricus (strain ATCC 35092 / DSM 1617 / JCM 11322 / P2) (Sulfolobus solfataricus).